The primary structure comprises 205 residues: Nuclear transcription factor Y subunit beta (205 aa).

The a domain stretch occupies residues 1–50; that stretch reads MDGDSSTTDASQLGIAGDYIGGSHYVIQPHDDTEDSMNDHEDTNGSKESF. Residues 24–50 are disordered; it reads HYVIQPHDDTEDSMNDHEDTNGSKESF. A compositionally biased stretch (basic and acidic residues) spans 37 to 50; the sequence is MNDHEDTNGSKESF. A b domain region spans residues 51-140; that stretch reads REQDIYLPIA…PLKLYLQKFR (90 aa). A DNA-binding region spans residues 57 to 63; that stretch reads LPIANVA. Residues 84–95 are subunit association domain (SAD); the sequence is VQECVSEFISFI. Residues 141–201 are c domain; that stretch reads EAMKGEKGIG…SYQQISGVQQ (61 aa).

The protein belongs to the NFYB/HAP3 subunit family. Heterotrimeric transcription factor composed of three components, NF-YA, NF-YB and NF-YC. NF-YB and NF-YC must interact and dimerize for NF-YA association and DNA binding.

The protein resides in the nucleus. Component of the sequence-specific heterotrimeric transcription factor (NF-Y) which specifically recognizes a 5'-CCAAT-3' box motif found in the promoters of its target genes. NF-Y can function as both an activator and a repressor, depending on its interacting cofactors. The chain is Nuclear transcription factor Y subunit beta (NFYB) from Gallus gallus (Chicken).